The chain runs to 142 residues: Large ribosomal subunit protein uL11 (142 aa).

Belongs to the universal ribosomal protein uL11 family. As to quaternary structure, part of the ribosomal stalk of the 50S ribosomal subunit. Interacts with L10 and the large rRNA to form the base of the stalk. L10 forms an elongated spine to which L12 dimers bind in a sequential fashion forming a multimeric L10(L12)X complex. Post-translationally, one or more lysine residues are methylated.

Its function is as follows. Forms part of the ribosomal stalk which helps the ribosome interact with GTP-bound translation factors. In Klebsiella pneumoniae (strain 342), this protein is Large ribosomal subunit protein uL11.